We begin with the raw amino-acid sequence, 247 residues long: Probable transcriptional regulatory protein Dalk_2958 (247 aa).

Belongs to the TACO1 family.

It is found in the cytoplasm. The chain is Probable transcriptional regulatory protein Dalk_2958 from Desulfatibacillum aliphaticivorans.